We begin with the raw amino-acid sequence, 190 residues long: ATP-dependent Clp protease proteolytic subunit 2 (190 aa).

Residue serine 98 is the Nucleophile of the active site. Histidine 123 is an active-site residue.

The protein belongs to the peptidase S14 family. In terms of assembly, fourteen ClpP subunits assemble into 2 heptameric rings which stack back to back to give a disk-like structure with a central cavity, resembling the structure of eukaryotic proteasomes.

It localises to the cytoplasm. It catalyses the reaction Hydrolysis of proteins to small peptides in the presence of ATP and magnesium. alpha-casein is the usual test substrate. In the absence of ATP, only oligopeptides shorter than five residues are hydrolyzed (such as succinyl-Leu-Tyr-|-NHMec, and Leu-Tyr-Leu-|-Tyr-Trp, in which cleavage of the -Tyr-|-Leu- and -Tyr-|-Trp bonds also occurs).. In terms of biological role, cleaves peptides in various proteins in a process that requires ATP hydrolysis. Has a chymotrypsin-like activity. Plays a major role in the degradation of misfolded proteins. The chain is ATP-dependent Clp protease proteolytic subunit 2 from Bacillus licheniformis (strain ATCC 14580 / DSM 13 / JCM 2505 / CCUG 7422 / NBRC 12200 / NCIMB 9375 / NCTC 10341 / NRRL NRS-1264 / Gibson 46).